The sequence spans 251 residues: Ubiquinone/menaquinone biosynthesis C-methyltransferase UbiE (251 aa).

Residues threonine 74, aspartate 95, and 123–124 (NA) each bind S-adenosyl-L-methionine.

The protein belongs to the class I-like SAM-binding methyltransferase superfamily. MenG/UbiE family.

It carries out the reaction a 2-demethylmenaquinol + S-adenosyl-L-methionine = a menaquinol + S-adenosyl-L-homocysteine + H(+). The catalysed reaction is a 2-methoxy-6-(all-trans-polyprenyl)benzene-1,4-diol + S-adenosyl-L-methionine = a 5-methoxy-2-methyl-3-(all-trans-polyprenyl)benzene-1,4-diol + S-adenosyl-L-homocysteine + H(+). The protein operates within quinol/quinone metabolism; menaquinone biosynthesis; menaquinol from 1,4-dihydroxy-2-naphthoate: step 2/2. It participates in cofactor biosynthesis; ubiquinone biosynthesis. Functionally, methyltransferase required for the conversion of demethylmenaquinol (DMKH2) to menaquinol (MKH2) and the conversion of 2-polyprenyl-6-methoxy-1,4-benzoquinol (DDMQH2) to 2-polyprenyl-3-methyl-6-methoxy-1,4-benzoquinol (DMQH2). This Edwardsiella ictaluri (strain 93-146) protein is Ubiquinone/menaquinone biosynthesis C-methyltransferase UbiE.